A 931-amino-acid polypeptide reads, in one-letter code: Protocadherin gamma-A1 (931 aa).

Positions 1 to 28 (MKIQKKLTGCSRLMLLCLSLELLLEAGA) are cleaved as a signal peptide. 6 Cadherin domains span residues 29–133 (GNIH…TPQF), 134–242 (QLEE…PPAF), 243–347 (TQAQ…APEV), 348–452 (TITS…SPVF), 453–562 (HQDS…APEI), and 570–682 (DGST…EPSA). Topologically, residues 29 to 692 (GNIHYSVPEE…KPNDSDLTLY (664 aa)) are extracellular. Asn265, Asn419, and Asn545 each carry an N-linked (GlcNAc...) asparagine glycan. Asn685 is a glycosylation site (N-linked (GlcNAc...) asparagine). Residues 693–713 (LVVAAAAVSCVFLAFVIVLLA) form a helical membrane-spanning segment. The Cytoplasmic portion of the chain corresponds to 714-931 (HRLRRWHKSR…KKKSGKKEKK (218 aa)). 2 disordered regions span residues 801-840 (KKEP…WPNN) and 901-931 (ATLT…KEKK). The segment covering 805–840 (FSQQAPPNTDWRFSQAQRPGTSGSQNGDDTGTWPNN) has biased composition (polar residues). Over residues 921–931 (NKKKSGKKEKK) the composition is skewed to basic residues.

The protein resides in the cell membrane. Its function is as follows. Potential calcium-dependent cell-adhesion protein. May be involved in the establishment and maintenance of specific neuronal connections in the brain. This chain is Protocadherin gamma-A1 (PCDHGA1), found in Homo sapiens (Human).